Here is a 129-residue protein sequence, read N- to C-terminus: Large ribosomal subunit protein eL32 (129 aa).

This sequence belongs to the eukaryotic ribosomal protein eL32 family.

The protein is Large ribosomal subunit protein eL32 (rpl32e) of Methanosarcina acetivorans (strain ATCC 35395 / DSM 2834 / JCM 12185 / C2A).